The primary structure comprises 149 residues: Probable calcium-binding protein CML25/26 (149 aa).

4 consecutive EF-hand domains span residues 1–35 (MASS…ALGE), 37–72 (VSEE…HQLQ), 77–113 (ESLR…LGSE), and 117–149 (LEME…MLMA). The Ca(2+) site is built by D13, D15, D17, K19, E24, D50, D52, D54, and E61. Ca(2+) is bound by residues D130, N132, D134, and E141.

In terms of biological role, potential calcium sensor. This chain is Probable calcium-binding protein CML25/26 (CML25), found in Oryza sativa subsp. japonica (Rice).